The sequence spans 356 residues: Tyrosine recombinase XerS (356 aa).

The 106-residue stretch at 16-121 (LMPWYVLEYY…ALSSLYKYLT (106 aa)) folds into the Core-binding (CB) domain. A Tyr recombinase domain is found at 169 to 354 (GFLTYIDQEH…VNDEQKNALD (186 aa)). Residues Arg-210, Lys-234, His-306, Arg-309, and His-332 contribute to the active site. Tyr-341 (O-(3'-phospho-DNA)-tyrosine intermediate) is an active-site residue.

This sequence belongs to the 'phage' integrase family. XerS subfamily.

The protein resides in the cytoplasm. With respect to regulation, ftsK is required for recombination. Site-specific tyrosine recombinase, which acts by catalyzing the cutting and rejoining of the recombining DNA molecules. Essential to convert dimers of the bacterial chromosome into monomers to permit their segregation at cell division. The protein is Tyrosine recombinase XerS of Streptococcus pneumoniae serotype 2 (strain D39 / NCTC 7466).